The sequence spans 120 residues: NAD(P)H-quinone oxidoreductase subunit 3 (120 aa).

Transmembrane regions (helical) follow at residues 10–30, 64–84, and 89–109; these read FLGF…TNLI, MFAL…PWAV, and LGLL…IALA.

Belongs to the complex I subunit 3 family. In terms of assembly, NDH-1 can be composed of about 15 different subunits; different subcomplexes with different compositions have been identified which probably have different functions.

Its subcellular location is the cellular thylakoid membrane. The catalysed reaction is a plastoquinone + NADH + (n+1) H(+)(in) = a plastoquinol + NAD(+) + n H(+)(out). It catalyses the reaction a plastoquinone + NADPH + (n+1) H(+)(in) = a plastoquinol + NADP(+) + n H(+)(out). In terms of biological role, NDH-1 shuttles electrons from an unknown electron donor, via FMN and iron-sulfur (Fe-S) centers, to quinones in the respiratory and/or the photosynthetic chain. The immediate electron acceptor for the enzyme in this species is believed to be plastoquinone. Couples the redox reaction to proton translocation, and thus conserves the redox energy in a proton gradient. Cyanobacterial NDH-1 also plays a role in inorganic carbon-concentration. The protein is NAD(P)H-quinone oxidoreductase subunit 3 of Prochlorococcus marinus (strain MIT 9515).